Here is a 131-residue protein sequence, read N- to C-terminus: MLIGVGTDIVQIPRIEKILHLYPELFAKKILTSQELKQFVLLGKIHHAAFLAKRFAAKEAVSKAFGVGIGQGINFKDITILNNDLGKPIVEVSSNYTNKLSPFNIHLSLADDYPVCVAFAVIESSYNVILG.

2 residues coordinate Mg(2+): Asp-8 and Glu-59.

Belongs to the P-Pant transferase superfamily. AcpS family. It depends on Mg(2+) as a cofactor.

It is found in the cytoplasm. It carries out the reaction apo-[ACP] + CoA = holo-[ACP] + adenosine 3',5'-bisphosphate + H(+). Functionally, transfers the 4'-phosphopantetheine moiety from coenzyme A to a Ser of acyl-carrier-protein. This Rickettsia massiliae (strain Mtu5) protein is Holo-[acyl-carrier-protein] synthase.